The primary structure comprises 121 residues: Mediator of RNA polymerase II transcription subunit 22 (121 aa).

This sequence belongs to the Mediator complex subunit 22 family. In terms of assembly, component of the Mediator complex.

It localises to the nucleus. Functionally, component of the Mediator complex, a coactivator involved in the regulated transcription of nearly all RNA polymerase II-dependent genes. Mediator functions as a bridge to convey information from gene-specific regulatory proteins to the basal RNA polymerase II transcription machinery. Mediator is recruited to promoters by direct interactions with regulatory proteins and serves as a scaffold for the assembly of a functional preinitiation complex with RNA polymerase II and the general transcription factors. In Kluyveromyces lactis (strain ATCC 8585 / CBS 2359 / DSM 70799 / NBRC 1267 / NRRL Y-1140 / WM37) (Yeast), this protein is Mediator of RNA polymerase II transcription subunit 22 (SRB6).